We begin with the raw amino-acid sequence, 97 residues long: Protein RnfH (97 aa).

The protein belongs to the UPF0125 (RnfH) family.

In Halorhodospira halophila (strain DSM 244 / SL1) (Ectothiorhodospira halophila (strain DSM 244 / SL1)), this protein is Protein RnfH.